The following is a 229-amino-acid chain: Prolactin (229 aa).

An N-terminal signal peptide occupies residues 1-30 (MDNKGWSLKGSLLPLLLLVSDLLLCQGVTS). A disulfide bond links cysteine 34 and cysteine 41. Residues serine 56, serine 64, and serine 120 each carry the phosphoserine modification. 2 disulfide bridges follow: cysteine 88/cysteine 204 and cysteine 221/cysteine 229.

Belongs to the somatotropin/prolactin family. As to quaternary structure, interacts with PRLR.

The protein resides in the secreted. Functionally, prolactin acts primarily on the mammary gland by promoting lactation. This Neovison vison (American mink) protein is Prolactin (PRL).